Here is a 510-residue protein sequence, read N- to C-terminus: Pantetheinase (510 aa).

A signal peptide spans 1–22 (MIMSQLLNYVAVLFFCVSRASS). Residues 31-307 (YEHAVILPNA…GKLLLAQLDS (277 aa)) form the CN hydrolase domain. A glycan (N-linked (GlcNAc...) asparagine) is linked at N39. E80 functions as the Proton acceptor in the catalytic mechanism. N-linked (GlcNAc...) asparagine glycans are attached at residues N87 and N147. K179 acts as the Proton donor in catalysis. N201 is a glycosylation site (N-linked (GlcNAc...) asparagine). C212 serves as the catalytic Nucleophile. N-linked (GlcNAc...) asparagine glycosylation is found at N316 and N354. D492 carries the GPI-anchor amidated aspartate lipid modification. Residues 493–510 (LTTQALRLNPKTDAWKSK) constitute a propeptide, removed in mature form. Residue T504 is glycosylated (O-linked (GalNAc...) threonine).

Belongs to the carbon-nitrogen hydrolase superfamily. BTD/VNN family. In terms of assembly, monomer.

It localises to the cell membrane. The catalysed reaction is (R)-pantetheine + H2O = cysteamine + (R)-pantothenate. Amidohydrolase that hydrolyzes specifically one of the carboamide linkages in D-pantetheine thus recycling pantothenic acid (vitamin B5) and releasing cysteamine. The chain is Pantetheinase (VNN1) from Bos taurus (Bovine).